We begin with the raw amino-acid sequence, 152 residues long: Lipoprotein signal peptidase (152 aa).

A run of 3 helical transmembrane segments spans residues 5–25 (LFVL…FWIV), 61–81 (WFFV…LATH), and 84–104 (LNIW…GNFI). Residues aspartate 114 and aspartate 130 contribute to the active site. Residues 125–145 (IFNVADSYLTVGVILLVICLW) traverse the membrane as a helical segment.

The protein belongs to the peptidase A8 family.

It localises to the cell membrane. The catalysed reaction is Release of signal peptides from bacterial membrane prolipoproteins. Hydrolyzes -Xaa-Yaa-Zaa-|-(S,diacylglyceryl)Cys-, in which Xaa is hydrophobic (preferably Leu), and Yaa (Ala or Ser) and Zaa (Gly or Ala) have small, neutral side chains.. It functions in the pathway protein modification; lipoprotein biosynthesis (signal peptide cleavage). This protein specifically catalyzes the removal of signal peptides from prolipoproteins. The polypeptide is Lipoprotein signal peptidase (Streptococcus pyogenes serotype M6 (strain ATCC BAA-946 / MGAS10394)).